The following is a 181-amino-acid chain: Cytochrome P450 monooxygenase dtpC (181 aa).

Cysteine 125 contributes to the heme binding site.

The protein belongs to the cytochrome P450 family. Heme is required as a cofactor.

It participates in alkaloid biosynthesis. Its pathway is secondary metabolite biosynthesis. In terms of biological role, cytochrome P450 monooxygenase; part of the gene cluster that mediates the biosynthesis of the dimeric diketopiperazine alkaloid ditryptophenaline. The nonribosomal peptide synthase dtpA accepts L-tryptophan and L-phenylalanine as its substrates and forms the phenylalanyl-tryptophanyl cyclic dipeptide product cyclophenylalanyltryptophenyl. The N-methyltransferase dtpB is responsible for the N-methylation of cyclophenylalanyltryptophenyl to yield cyclo-N-methylphenylalanyltryptophenyl. The cytochrome P450 monooxygenase is responsible not only for pyrroloindole ring formation but also for concurrent dimerization of N-methylphenylalanyltryptophanyl diketopiperazine monomers into a homodimeric product. This is Cytochrome P450 monooxygenase dtpC from Aspergillus flavus (strain ATCC 200026 / FGSC A1120 / IAM 13836 / NRRL 3357 / JCM 12722 / SRRC 167).